Consider the following 1203-residue polypeptide: Kinesin-like protein KIN-14Q (1203 aa).

A disordered region spans residues 1–28 (MEDCCDPLLATDASPRPESFSRSEKDIA). Over residues 19 to 28 (SFSRSEKDIA) the composition is skewed to basic and acidic residues. The stretch at 336 to 395 (ENLVCRAEEEAEGMRSDCEQQRKEMEDMKRMVEELKLENQQKTRECEEALNSLSEIQNEL) forms a coiled coil. The 327-residue stretch at 499-825 (NIRVFCRCRP…LNFASRVRGI (327 aa)) folds into the Kinesin motor domain. Residue 582–589 (GQTGTGKT) coordinates ATP. Positions 846–901 (VEKWKQDMKGKDEQIRKMEETMYGLEAKIKERDTKNKTLQDKVKELESQLLVERKL) form a coiled coil. Positions 907 to 931 (DTKIAEQQTKQQTEDENNTSKRPPL) are disordered.

The protein belongs to the TRAFAC class myosin-kinesin ATPase superfamily. Kinesin family. KIN-14 subfamily.

This Arabidopsis thaliana (Mouse-ear cress) protein is Kinesin-like protein KIN-14Q.